The chain runs to 209 residues: Regulator of G-protein signaling 1 (209 aa).

The disordered stretch occupies residues 19–42 (FSASPKDSKEHSHSLLDDKKQKKR). Basic and acidic residues predominate over residues 24–38 (KDSKEHSHSLLDDKK). The RGS domain maps to 85–200 (SLEKLLANQT…LKSNIYLNLL (116 aa)).

Interacts with GNAI1 and GNAQ. In terms of tissue distribution, detected in spleen, lymph node and intestine.

It is found in the cell membrane. Its subcellular location is the cytoplasm. It localises to the cytosol. Regulates G protein-coupled receptor signaling cascades, including signaling downstream of the N-formylpeptide chemoattractant receptors and leukotriene receptors. Inhibits B cell chemotaxis toward CXCL12. Inhibits signal transduction by increasing the GTPase activity of G protein alpha subunits thereby driving them into their inactive GDP-bound form. This Mus musculus (Mouse) protein is Regulator of G-protein signaling 1 (Rgs1).